A 205-amino-acid polypeptide reads, in one-letter code: MSDQLFERTMAFAGILQAVAQVQYIARHGDSDKDALAASLQSVLVTNPETTSDVYADKVALRKGYELIVSQLGDAKQKDVEVTRYLVGILALERKLTRSSNAMGMLSERINQIHRQLSHFEITDEQVIANFAGIYSDIISELGPKLQISGNPEFLKRTQTQQKIRALLLSAMRSAVLWRQLGGKRRHLVFARKTIVDTAMKSLTL.

Belongs to the HflD family.

It is found in the cytoplasm. The protein localises to the cell inner membrane. This Shewanella halifaxensis (strain HAW-EB4) protein is High frequency lysogenization protein HflD homolog.